The sequence spans 267 residues: tRNA pseudouridine synthase A (267 aa).

Catalysis depends on aspartate 55, which acts as the Nucleophile. Residue tyrosine 111 participates in substrate binding.

This sequence belongs to the tRNA pseudouridine synthase TruA family.

It catalyses the reaction uridine(38/39/40) in tRNA = pseudouridine(38/39/40) in tRNA. Formation of pseudouridine at positions 38, 39 and 40 in the anticodon stem and loop of transfer RNAs. This is tRNA pseudouridine synthase A from Thermococcus kodakarensis (strain ATCC BAA-918 / JCM 12380 / KOD1) (Pyrococcus kodakaraensis (strain KOD1)).